Here is a 275-residue protein sequence, read N- to C-terminus: Malonyl-[acyl-carrier protein] O-methyltransferase (275 aa).

Belongs to the methyltransferase superfamily.

It catalyses the reaction malonyl-[ACP] + S-adenosyl-L-methionine = malonyl-[ACP] methyl ester + S-adenosyl-L-homocysteine. The protein operates within cofactor biosynthesis; biotin biosynthesis. In terms of biological role, converts the free carboxyl group of a malonyl-thioester to its methyl ester by transfer of a methyl group from S-adenosyl-L-methionine (SAM). It allows to synthesize pimeloyl-ACP via the fatty acid synthetic pathway. The polypeptide is Malonyl-[acyl-carrier protein] O-methyltransferase (Methylococcus capsulatus (strain ATCC 33009 / NCIMB 11132 / Bath)).